The following is a 638-amino-acid chain: ABC transporter G family member 12 (638 aa).

The segment at 42–61 (KQEKAKKKNDTESSTGDMNT) is disordered. An ABC transporter domain is found at 58–301 (DMNTGVSTTI…SLGYPCPNNT (244 aa)). 91-98 (GPSGSGKS) provides a ligand contact to ATP. Residues 374–633 (GNFVARVGTA…WTSYLALHFL (260 aa)) enclose the ABC transmembrane type-2 domain. The next 7 membrane-spanning stretches (helical) occupy residues 376–396 (FVARVGTAVVTGLLFGVCFAG), 410–430 (TIFFLITGLNLTPFAVISLFL), 459–479 (TLIVFLVALINAAICYLFAHL), 484–504 (GHFFFAIMVYFFVHLLSDFMI), 516–536 (MTFAYGSGLSVIYMLFAGFYV), 544–564 (SFGWLHWVNPLFYSFVSLVVN), and 612–632 (FGVVVAWTVFFFWTSYLALHF).

This sequence belongs to the ABC transporter superfamily. ABCG family. Eye pigment precursor importer (TC 3.A.1.204) subfamily.

The protein resides in the membrane. The protein is ABC transporter G family member 12 (abcG12) of Dictyostelium discoideum (Social amoeba).